We begin with the raw amino-acid sequence, 206 residues long: Outer-membrane lipoprotein carrier protein (206 aa).

The signal sequence occupies residues 1–20; it reads MRLIRMLLPVLALTTLTAHA.

The protein belongs to the LolA family. Monomer.

It localises to the periplasm. Participates in the translocation of lipoproteins from the inner membrane to the outer membrane. Only forms a complex with a lipoprotein if the residue after the N-terminal Cys is not an aspartate (The Asp acts as a targeting signal to indicate that the lipoprotein should stay in the inner membrane). This is Outer-membrane lipoprotein carrier protein from Pseudomonas fluorescens (strain Pf0-1).